We begin with the raw amino-acid sequence, 302 residues long: Phospho-N-acetylmuramoyl-pentapeptide-transferase (302 aa).

A run of 9 helical transmembrane segments spans residues 1-21 (MIAA…KLFR), 42-62 (GTPT…GMIS), 68-88 (VLLG…LSVV), 123-143 (FFGF…LVIV), 154-174 (GLDG…WFFL), 178-198 (GVSE…LVFN), 204-224 (IFMG…VSVL), 229-249 (FYLV…ILQV), and 279-299 (IVAV…EIFG).

Belongs to the glycosyltransferase 4 family. MraY subfamily. The cofactor is Mg(2+).

It localises to the cell inner membrane. It catalyses the reaction UDP-N-acetyl-alpha-D-muramoyl-L-alanyl-gamma-D-glutamyl-meso-2,6-diaminopimeloyl-D-alanyl-D-alanine + di-trans,octa-cis-undecaprenyl phosphate = di-trans,octa-cis-undecaprenyl diphospho-N-acetyl-alpha-D-muramoyl-L-alanyl-D-glutamyl-meso-2,6-diaminopimeloyl-D-alanyl-D-alanine + UMP. Its pathway is cell wall biogenesis; peptidoglycan biosynthesis. Catalyzes the initial step of the lipid cycle reactions in the biosynthesis of the cell wall peptidoglycan: transfers peptidoglycan precursor phospho-MurNAc-pentapeptide from UDP-MurNAc-pentapeptide onto the lipid carrier undecaprenyl phosphate, yielding undecaprenyl-pyrophosphoryl-MurNAc-pentapeptide, known as lipid I. This Thermotoga petrophila (strain ATCC BAA-488 / DSM 13995 / JCM 10881 / RKU-1) protein is Phospho-N-acetylmuramoyl-pentapeptide-transferase.